A 349-amino-acid polypeptide reads, in one-letter code: Probable transporter vicT (349 aa).

The 129-residue stretch at 25–153 folds into the EamA domain; that stretch reads IAAALLHALA…TALAGVVLVL (129 aa). 9 helical membrane passes run 49-69, 89-109, 111-131, 133-153, 179-199, 215-235, 244-264, 269-289, and 294-314; these read PFTVLQIRLFITVLGCTAYLW, AAGGVFGACGFYLSISYLSLS, ATVLNFIAPLGAIMLTTYWEG, TFAFLDLIACITALAGVVLVL, LKGVVSGITGVAGGIVAFSAM, FGVSICIVTTAFSTIMPEVVW, LLAIIGILGLVMEYLLTAGLG, RVTIMIYSQVLWALFLDWAIW, and NVLTVLGSMVVVASLAVPYLF.

Belongs to the TPT transporter family. SLC35D subfamily.

Its subcellular location is the membrane. Functionally, probable transporter; part of the gene cluster that mediates the biosynthesis of the secondary metabolite victorin, the molecular basis for Victoria blight of oats. This chain is Probable transporter vicT, found in Bipolaris victoriae (strain FI3) (Victoria blight of oats agent).